We begin with the raw amino-acid sequence, 40 residues long: Antimicrobial peptide 1 (40 aa).

The Chitin-binding type-1 domain occupies 1–40 (AQCGAQGGGATCPGGLCCSQWGWCGSTPKYCGAGCQSNCK). Cystine bridges form between C3-C18, C12-C24, C17-C31, and C35-C39.

In terms of processing, not glycosylated.

Antimicrobial peptide active against plant pathogenic fungi and Gram-negative and -positive bacteria. This is Antimicrobial peptide 1 from Fagopyrum esculentum (Common buckwheat).